The primary structure comprises 242 residues: MIVLHHLKNSRSTRIVWMLEELKVPYEIKVYDRVDGRAPPAYTKLSPLGKSPIVVDDGVTYIESAAILEHLVRKYGPSFKPSEEDVAELEKYELWMHFSEASLMPFIWASHVLDLSVNMTPIFFRYIVRQFVNGIKSKYLSKETFLNLDYIDNHLASNEYFAGEQFTAADPQMCFPIFAAQRDYLSQKPYKNIKRWMRVVSDRPACRIAAEKVEDNTLTLFSDVERYSHPPTPPPEQVRSDE.

A GST N-terminal domain is found at M1 to F79. In terms of domain architecture, GST C-terminal spans D85–P234. Residue S228 is modified to Phosphoserine. At T232 the chain carries Phosphothreonine.

Belongs to the GST superfamily. In terms of assembly, interacts with sad1.

The protein resides in the cytoplasm. It catalyses the reaction RX + glutathione = an S-substituted glutathione + a halide anion + H(+). In terms of biological role, may have a role in the detoxification of various heavy metals. This is Glutathione S-transferase 3 (gst3) from Schizosaccharomyces pombe (strain 972 / ATCC 24843) (Fission yeast).